We begin with the raw amino-acid sequence, 131 residues long: Protein NrdI (131 aa).

It belongs to the NrdI family.

In terms of biological role, probably involved in ribonucleotide reductase function. The polypeptide is Protein NrdI (Bacillus licheniformis (strain ATCC 14580 / DSM 13 / JCM 2505 / CCUG 7422 / NBRC 12200 / NCIMB 9375 / NCTC 10341 / NRRL NRS-1264 / Gibson 46)).